The chain runs to 237 residues: MDAREIIKYIQESEKKTPVKVYIKGNLSEINWEQEGIKSFITGNTGVIFGEWKIVSKLMEANQKNIEDFVLENDRANSAIPLLDLKGIHARIEPGAIIREKVEIGNNAVIMMGASINIGAVIGEGTMIDMNVVVGGRGTIGKNCHIGAGAVIAGVIEPPSATPVIIEDDVVIGANAVVLEGIRVGKGSVVAAGAVVVQDVPPNVVVAGTPARVIKEIDEKTKSKTEIVKELRSLIEE.

Belongs to the transferase hexapeptide repeat family. DapH subfamily.

It carries out the reaction (S)-2,3,4,5-tetrahydrodipicolinate + acetyl-CoA + H2O = L-2-acetamido-6-oxoheptanedioate + CoA. The protein operates within amino-acid biosynthesis; L-lysine biosynthesis via DAP pathway; LL-2,6-diaminopimelate from (S)-tetrahydrodipicolinate (acetylase route): step 1/3. Catalyzes the transfer of an acetyl group from acetyl-CoA to tetrahydrodipicolinate. This Alkaliphilus metalliredigens (strain QYMF) protein is 2,3,4,5-tetrahydropyridine-2,6-dicarboxylate N-acetyltransferase.